A 618-amino-acid chain; its full sequence is Polyamine transporter TPO5 (618 aa).

The Cytoplasmic portion of the chain corresponds to 1–60 (MPEYTLLADNIRENIVHFDPNGLFDNLHTIVHEDDSQENEEAEHFNYDQVLDKSLLSRGS). A helical transmembrane segment spans residues 61-84 (IVGLGLGLMSPVLGMCTSMAIGLI). The Extracellular segment spans residues 85-90 (NGGPLT). A helical transmembrane segment spans residues 91–110 (IMLGFLISGVCIWFSSLSLG). Residues 111-131 (EIVSKFPMELHVGSAMLAPEK) lie on the Cytoplasmic side of the membrane. The chain crosses the membrane as a helical span at residues 132–148 (LKLVCSWYTGWLMLIGN). Residues 149 to 154 (WTMSTS) lie on the Extracellular side of the membrane. A helical membrane pass occupies residues 155-171 (ITFAGAQLTISLILMTN). The Cytoplasmic segment spans residues 172-179 (SNLISEAH). The chain crosses the membrane as a helical span at residues 180 to 200 (LIFYTVIVFYLVVTVVGLVNL). At 201–211 (KFARFIETINK) the chain is on the extracellular side. The chain crosses the membrane as a helical span at residues 212–231 (VCVYWIIYAIIFIDILLLVF). Topologically, residues 232–297 (HKGKFRSLKY…EKDIPRGMSN (66 aa)) are cytoplasmic. A helical membrane pass occupies residues 298–317 (AVLLSAFSGVIFLIPIMLIL). Topologically, residues 318–342 (PDNDLLFTNHKVLPIVNIFTKSTDS) are extracellular. The chain crosses the membrane as a helical span at residues 343-367 (VVLSFFLVLLILGNLLFSGIGSITT). Over 368 to 402 (SSRAVYSFSRDQAIPYYDKWTYVEPDSQSKVPKNS) the chain is Cytoplasmic. A helical membrane pass occupies residues 403 to 419 (VVLSMIISYFLGLLALI). The Extracellular segment spans residues 420–425 (STAAFN). The chain crosses the membrane as a helical span at residues 426–449 (AFIGAAVLCLCSATFIPLVLVLFT). Over 450-464 (RRRAIRSAPVKIRYK) the chain is Cytoplasmic. Residues 465–486 (FGWFINIVSIVWLLLSMVSVCL) form a helical membrane-spanning segment. The Extracellular portion of the chain corresponds to 487–498 (PTQVPVTFKTMN). A helical membrane pass occupies residues 499–516 (YALMVYVFCILVITGLYF). Topologically, residues 517 to 618 (KWGKYNFRLP…DLADDRRYDI (102 aa)) are cytoplasmic. Phosphoserine is present on Ser-569. Residues 576-618 (VHPKSSTENPFEENEENVITDYGDEHHTAEQEFDLADDRRYDI) form a disordered region. Basic and acidic residues predominate over residues 598-618 (GDEHHTAEQEFDLADDRRYDI).

Belongs to the amino acid-polyamine-organocation (APC) superfamily.

The protein resides in the golgi apparatus membrane. In terms of biological role, required for polyamine transport. Transports putrescine effectively and spermidine less effectively. The sequence is that of Polyamine transporter TPO5 (TPO5) from Saccharomyces cerevisiae (strain ATCC 204508 / S288c) (Baker's yeast).